A 129-amino-acid chain; its full sequence is Fluoride-specific ion channel FluC 2 (129 aa).

Helical transmembrane passes span 3 to 23, 32 to 52, 59 to 79, and 90 to 110; these read FLYV…MNLW, ATLA…RFLA, LVLL…FSAF, and GAWL…LIMV. The Na(+) site is built by G71 and T74.

Belongs to the fluoride channel Fluc/FEX (TC 1.A.43) family.

It is found in the cell membrane. The catalysed reaction is fluoride(in) = fluoride(out). Na(+) is not transported, but it plays an essential structural role and its presence is essential for fluoride channel function. In terms of biological role, fluoride-specific ion channel. Important for reducing fluoride concentration in the cell, thus reducing its toxicity. This chain is Fluoride-specific ion channel FluC 2, found in Listeria monocytogenes serovar 1/2a (strain ATCC BAA-679 / EGD-e).